Reading from the N-terminus, the 284-residue chain is RNase adapter protein RapZ (284 aa).

8 to 15 serves as a coordination point for ATP; that stretch reads GRSGSGKS. Residue 56–59 participates in GTP binding; the sequence is DVRN. The segment at 266-284 is RNA-binding; it reads RSRGKNVQSRHRTLEKRRS.

It belongs to the RapZ-like family. RapZ subfamily. In terms of assembly, homotrimer.

Functionally, modulates the synthesis of GlmS, by affecting the processing and stability of the regulatory small RNA GlmZ. When glucosamine-6-phosphate (GlcN6P) concentrations are high in the cell, RapZ binds GlmZ and targets it to cleavage by RNase E. Consequently, GlmZ is inactivated and unable to activate GlmS synthesis. Under low GlcN6P concentrations, RapZ is sequestered and inactivated by an other regulatory small RNA, GlmY, preventing GlmZ degradation and leading to synthesis of GlmS. This Erwinia tasmaniensis (strain DSM 17950 / CFBP 7177 / CIP 109463 / NCPPB 4357 / Et1/99) protein is RNase adapter protein RapZ.